A 421-amino-acid chain; its full sequence is Phosphoglycerate kinase, cytosolic (421 aa).

Residues valine 23, aspartate 24, phenylalanine 25, asparagine 26, arginine 39, serine 61, histidine 62, glycine 64, arginine 65, arginine 135, histidine 172, and arginine 173 each coordinate (2R)-3-phosphoglycerate. ADP-binding residues include glycine 218 and alanine 219. Glycine 218 contacts CDP. Alanine 219 and lysine 220 together coordinate AMP. Alanine 219 is a binding site for ATP. Alanine 219 serves as a coordination point for Mg(2+). Lysine 220 lines the (2R)-3-phosphoglycerate pocket. CDP is bound at residue aspartate 223. Position 223 (aspartate 223) interacts with Mg(2+). The ADP site is built by lysine 224 and glycine 242. Lysine 224 contacts AMP. Lysine 224 provides a ligand contact to ATP. A CDP-binding site is contributed by glycine 242. AMP is bound by residues alanine 243 and alanine 315. ATP-binding residues include alanine 243 and alanine 315. ADP is bound by residues alanine 315 and asparagine 339. 2 residues coordinate CDP: glycine 340 and phenylalanine 345. ADP is bound by residues phenylalanine 345, glutamate 346, aspartate 378, and serine 379. Glutamate 346 lines the AMP pocket. Residues glutamate 346, aspartate 378, and serine 379 each coordinate ATP. A Mg(2+)-binding site is contributed by aspartate 378.

Belongs to the phosphoglycerate kinase family. As to quaternary structure, monomer. The cofactor is Mg(2+).

The protein resides in the cytoplasm. It carries out the reaction (2R)-3-phosphoglycerate + ATP = (2R)-3-phospho-glyceroyl phosphate + ADP. The protein operates within carbohydrate degradation; glycolysis; pyruvate from D-glyceraldehyde 3-phosphate: step 2/5. This chain is Phosphoglycerate kinase, cytosolic, found in Trypanosoma brucei brucei.